The sequence spans 257 residues: Phosphonates import ATP-binding protein PhnC (257 aa).

Residues 2-246 (IEFRNVSKVY…KFAEIYGDVA (245 aa)) form the ABC transporter domain. ATP is bound at residue 35–42 (GLSGAGKS).

The protein belongs to the ABC transporter superfamily. Phosphonates importer (TC 3.A.1.9.1) family. The complex is composed of two ATP-binding proteins (PhnC), two transmembrane proteins (PhnE) and a solute-binding protein (PhnD).

The protein resides in the cell membrane. The catalysed reaction is phosphonate(out) + ATP + H2O = phosphonate(in) + ADP + phosphate + H(+). Its function is as follows. Part of the ABC transporter complex PhnCDE involved in phosphonates import. Responsible for energy coupling to the transport system. This Bacillus thuringiensis subsp. konkukian (strain 97-27) protein is Phosphonates import ATP-binding protein PhnC.